We begin with the raw amino-acid sequence, 403 residues long: Ribosomal RNA large subunit methyltransferase I (403 aa).

A PUA domain is found at 9–88 (YPRLVLSKGR…ESIDIAFFTR (80 aa)).

It belongs to the methyltransferase superfamily. RlmI family.

The protein resides in the cytoplasm. The enzyme catalyses cytidine(1962) in 23S rRNA + S-adenosyl-L-methionine = 5-methylcytidine(1962) in 23S rRNA + S-adenosyl-L-homocysteine + H(+). Specifically methylates the cytosine at position 1962 (m5C1962) of 23S rRNA. The chain is Ribosomal RNA large subunit methyltransferase I from Salmonella enteritidis PT4 (strain P125109).